The following is a 201-amino-acid chain: Protein tirC (201 aa).

The region spanning 52 to 186 is the TIR domain; it reads ERIKVFIVHG…YVWINYTEDL (135 aa).

This Dictyostelium discoideum (Social amoeba) protein is Protein tirC (tirC).